Here is a 140-residue protein sequence, read N- to C-terminus: Large ribosomal subunit protein uL11 (140 aa).

It belongs to the universal ribosomal protein uL11 family. In terms of assembly, part of the ribosomal stalk of the 50S ribosomal subunit. Interacts with L10 and the large rRNA to form the base of the stalk. L10 forms an elongated spine to which L12 dimers bind in a sequential fashion forming a multimeric L10(L12)X complex. In terms of processing, one or more lysine residues are methylated.

In terms of biological role, forms part of the ribosomal stalk which helps the ribosome interact with GTP-bound translation factors. The sequence is that of Large ribosomal subunit protein uL11 from Staphylococcus epidermidis (strain ATCC 35984 / DSM 28319 / BCRC 17069 / CCUG 31568 / BM 3577 / RP62A).